The following is a 452-amino-acid chain: GATA-binding factor 2 (452 aa).

Residues 130 to 182 are disordered; the sequence is GGSLYPGTGSSACPSSSHSSPHLFGFPPTPPKDVSPDPGPASPPSSSRLEDKD. Residues 139–151 show a composition bias toward low complexity; that stretch reads SSACPSSSHSSPH. Pro residues predominate over residues 156-172; that stretch reads PPTPPKDVSPDPGPASP. 2 GATA-type zinc fingers span residues 267–291 and 321–345; these read CVNC…CNAC and CANC…CNAC. Residues 426 to 438 show a composition bias toward polar residues; it reads QTPTPIHPSSSLS. Residues 426 to 452 are disordered; the sequence is QTPTPIHPSSSLSFGHPHHSSMVTAMG.

In terms of tissue distribution, expressed in the developing ventral blood island, and in the embryonic nervous system.

The protein resides in the nucleus. This chain is GATA-binding factor 2 (gata2), found in Xenopus laevis (African clawed frog).